The sequence spans 142 residues: Large ribosomal subunit protein uL11 (142 aa).

The protein belongs to the universal ribosomal protein uL11 family. In terms of assembly, part of the ribosomal stalk of the 50S ribosomal subunit. Interacts with L10 and the large rRNA to form the base of the stalk. L10 forms an elongated spine to which L12 dimers bind in a sequential fashion forming a multimeric L10(L12)X complex. In terms of processing, one or more lysine residues are methylated.

Functionally, forms part of the ribosomal stalk which helps the ribosome interact with GTP-bound translation factors. The polypeptide is Large ribosomal subunit protein uL11 (Cronobacter sakazakii (strain ATCC BAA-894) (Enterobacter sakazakii)).